We begin with the raw amino-acid sequence, 448 residues long: Vimentin (448 aa).

The head stretch occupies residues 1-77 (PRHLEPAGSN…FSLADAINTE (77 aa)). At Ser-9 the chain carries Phosphoserine. Thr-16 carries O-linked (GlcNAc) threonine glycosylation. Ser-17 bears the Phosphoserine; by PKC; alternate mark. Ser-17 is a glycosylation site (O-linked (GlcNAc) serine; alternate). Position 22 is a phosphoserine; by CaMK2, PKA, PKC and ROCK2 (Ser-22). 3 positions are modified to phosphoserine: Ser-29, Ser-31, and Ser-33. Tyr-35 carries the phosphotyrosine modification. At Ser-37 the chain carries Phosphoserine. Position 38 is a phosphoserine; by CDK5 and CDK1 (Ser-38). Residue Tyr-43 is modified to Phosphotyrosine. A Phosphoserine; by PKA and PKC modification is found at Ser-48. At Ser-54 the chain carries Phosphoserine; by AURKB and ROCK2. Position 55 is a phosphoserine (Ser-55). Ser-65 is subject to Phosphoserine; by CaMK2. Ser-69 carries the post-translational modification Phosphoserine. The coil 1A stretch occupies residues 78–113 (FKNTRTNEKVELQELNDRFADYIDKVRFLEQQNKIL). The stretch at 78–113 (FKNTRTNEKVELQELNDRFADYIDKVRFLEQQNKIL) forms a coiled coil. The region spanning 85–393 (EKVELQELND…KLLEGEESRI (309 aa)) is the IF rod domain. Residue Lys-86 forms a Glycyl lysine isopeptide (Lys-Gly) (interchain with G-Cter in SUMO2) linkage. Phosphotyrosine is present on Tyr-99. An N6-acetyllysine; alternate mark is found at Lys-102, Lys-111, and Lys-121. An N6-succinyllysine; alternate mark is found at Lys-102 and Lys-111. Glycyl lysine isopeptide (Lys-Gly) (interchain with G-Cter in SUMO2); alternate cross-links involve residues Lys-102, Lys-111, and Lys-121. A linker 1 region spans residues 114–135 (LAELEQLKGQGKSRLGDLYEEE). Residue Ser-126 is modified to Phosphoserine. The stretch at 136–227 (MRELRRQVDQ…KLHDEEIQEL (92 aa)) forms a coiled coil. Residues 136 to 227 (MRELRRQVDQ…KLHDEEIQEL (92 aa)) form a coil 1B region. At Lys-150 the chain carries N6-acetyllysine. The residue at position 170 (Lys-170) is an N6-acetyllysine; alternate. Lys-170 carries the post-translational modification N6-succinyllysine; alternate. Ser-196 carries the phosphoserine modification. Lys-205 carries the post-translational modification N6-acetyllysine; alternate. A Glycyl lysine isopeptide (Lys-Gly) (interchain with G-Cter in SUMO2); alternate cross-link involves residue Lys-205. Position 208 is a phosphoserine (Ser-208). Residue Lys-217 is modified to N6-acetyllysine. Residues 228–250 (QAQIQEQHVQIDVDVSKPDLTAA) are linker 12. A Glycyl lysine isopeptide (Lys-Gly) (interchain with G-Cter in SUMO2) cross-link involves residue Lys-244. The interval 251–389 (LRDVRQQYES…ATYRKLLEGE (139 aa)) is coil 2. Position 276 is an N6-acetyllysine; alternate (Lys-276). Lys-276 carries the post-translational modification N6-succinyllysine; alternate. Lys-276 participates in a covalent cross-link: Glycyl lysine isopeptide (Lys-Gly) (interchain with G-Cter in SUMO2); alternate. Ser-281 carries the post-translational modification Phosphoserine. A coiled-coil region spans residues 285–389 (NRNNDALRQA…ATYRKLLEGE (105 aa)). A Glycyl lysine isopeptide (Lys-Gly) (interchain with G-Cter in SUMO2) cross-link involves residue Lys-295. A Phosphoserine modification is found at Ser-307. Residues 308–311 (LTCE) carry the [IL]-x-C-x-x-[DE] motif motif. Residue Lys-355 is modified to N6-acetyllysine; alternate. Lys-355 is covalently cross-linked (Glycyl lysine isopeptide (Lys-Gly) (interchain with G-Cter in SUMO2); alternate). The tract at residues 390–448 (ESRISLPLPNFSSLNLRETNLESLPLVDTHSKRTLLIKTVETRDGQVINETSQHHDDLE) is tail. Residues Ser-391, Ser-394, Ser-401, and Ser-402 each carry the phosphoserine modification. Residue Thr-408 is modified to Phosphothreonine. Residue Ser-412 is modified to Phosphoserine. The residue at position 418 (Thr-418) is a Phosphothreonine. Ser-420 is modified (phosphoserine). Lys-421 participates in a covalent cross-link: Glycyl lysine isopeptide (Lys-Gly) (interchain with G-Cter in SUMO2). Position 427 is an N6-acetyllysine; alternate (Lys-427). Residue Lys-427 is modified to N6-succinyllysine; alternate. Lys-427 is covalently cross-linked (Glycyl lysine isopeptide (Lys-Gly) (interchain with G-Cter in SUMO2); alternate). Residue Lys-427 forms a Glycyl lysine isopeptide (Lys-Gly) (interchain with G-Cter in SUMO1); alternate linkage. Thr-428 and Thr-440 each carry phosphothreonine. Ser-441 is subject to Phosphoserine.

This sequence belongs to the intermediate filament family. In terms of assembly, homomer assembled from elementary dimers. Identified in complexes that contain VIM, EZR, AHNAK, BFSP1, BFSP2, ANK2, PLEC, PRX and spectrin. Interacts with BCAS3. Interacts with LGSN. Interacts with SYNM. Interacts (via rod region) with PLEC (via CH 1 domain). Interacts with STK33. Interacts with LARP6. Interacts with RAB8B. Interacts with TOR1A; the interaction associates TOR1A with the cytoskeleton. Interacts with TOR1AIP1. Interacts with TOR1AIP1. Interacts with DIAPH1. Interacts with EPPK1; interaction is dependent of higher-order structure of intermediate filament. Interacts with the non-receptor tyrosine kinase SRMS; the interaction leads to phosphorylation of VIM. Interacts with NOD2. Interacts (via head region) with CORO1C. Interacts with HDGF. Interacts with PRKCE (via phorbol-ester/DAG-type 2 domain). Interacts with BFSP2. Interacts with PPL. Interacts with PKP1 and PKP2. Interacts with SCRIB (via PDZ domains); the interaction protects SCRIB from proteasomal degradation and facilitates SCRIB localization to intermediate filaments, the interaction is reduced by cell contact inhibition. Post-translationally, one of the most prominent phosphoproteins in various cells of mesenchymal origin. Phosphorylation is enhanced during cell division, at which time vimentin filaments are significantly reorganized. Phosphorylation by PKN1 inhibits the formation of filaments. Filament disassembly during mitosis is promoted by phosphorylation at Ser-37 as well as by nestin. Phosphorylated at Ser-38 by CDK5 during neutrophil secretion in the cytoplasm. Phosphorylated by STK33. Phosphorylated on tyrosine residues by SRMS. S-nitrosylation is induced by interferon-gamma and oxidatively-modified low-densitity lipoprotein (LDL(ox)) possibly implicating the iNOS-S100A8/9 transnitrosylase complex.

The protein localises to the cytoplasm. It localises to the cytoskeleton. Its subcellular location is the nucleus matrix. It is found in the cell membrane. Vimentins are class-III intermediate filaments found in various non-epithelial cells, especially mesenchymal cells. Vimentin is attached to the nucleus, endoplasmic reticulum, and mitochondria, either laterally or terminally. Plays a role in cell directional movement, orientation, cell sheet organization and Golgi complex polarization at the cell migration front. Protects SCRIB from proteasomal degradation and facilitates its localization to intermediate filaments in a cell contact-mediated manner. In terms of biological role, involved with LARP6 in the stabilization of type I collagen mRNAs for CO1A1 and CO1A2. The chain is Vimentin (VIM) from Cricetulus griseus (Chinese hamster).